Here is a 672-residue protein sequence, read N- to C-terminus: Flap endonuclease 1 (672 aa).

The tract at residues 1–106 (MGIKGLTKFI…SELEKRGEKR (106 aa)) is N-domain. Asp-34 contacts Mg(2+). Arg-47 and Arg-72 together coordinate DNA. Asp-88, Glu-160, Glu-162, Asp-181, and Asp-183 together coordinate Mg(2+). An I-domain region spans residues 124–266 (EIKKQSGRTV…KTAYNLIKEY (143 aa)). A DNA-binding site is contributed by Glu-160. DNA is bound by residues Gly-244 and Asp-246. Asp-246 is a binding site for Mg(2+). Residues 349–357 (TQRRLDNFF) are interaction with PCNA. Residues 371 to 610 (ETKKEQTLPA…EDSPNSYNNI (240 aa)) are disordered. Composition is skewed to basic and acidic residues over residues 413–493 (MKEE…KKSL), 502–526 (DSDK…EKIN), and 535–548 (DHSR…KDNI). Low complexity predominate over residues 549–584 (SDINNNNNNNNSSSNNNNISNNHFNSVSSNSTFNSS). The span at 587 to 603 (LKSEDTLKSNSPLKEDS) shows a compositional bias: basic and acidic residues.

The protein belongs to the XPG/RAD2 endonuclease family. FEN1 subfamily. Interacts with PCNA1 and PCNA2. Three molecules of FEN1 bind to one PCNA trimer with each molecule binding to one PCNA monomer. PCNA stimulates the nuclease activity without altering cleavage specificity. It depends on Mg(2+) as a cofactor. Phosphorylated. Phosphorylation upon DNA damage induces relocalization to the nuclear plasma.

The protein resides in the nucleus. Its subcellular location is the nucleolus. It is found in the nucleoplasm. The protein localises to the mitochondrion. Structure-specific nuclease with 5'-flap endonuclease and 5'-3' exonuclease activities involved in DNA replication and repair. During DNA replication, cleaves the 5'-overhanging flap structure that is generated by displacement synthesis when DNA polymerase encounters the 5'-end of a downstream Okazaki fragment. It enters the flap from the 5'-end and then tracks to cleave the flap base, leaving a nick for ligation. Also involved in the long patch base excision repair (LP-BER) pathway, by cleaving within the apurinic/apyrimidinic (AP) site-terminated flap. Acts as a genome stabilization factor that prevents flaps from equilibrating into structures that lead to duplications and deletions. Also possesses 5'-3' exonuclease activity on nicked or gapped double-stranded DNA, and exhibits RNase H activity. Also involved in replication and repair of rDNA and in repairing mitochondrial DNA. In Plasmodium falciparum (isolate 3D7), this protein is Flap endonuclease 1.